The chain runs to 152 residues: MSIAPLLRKVFLIDLIKGLSITFKYQAPKDCQTEQYPQERPVITDRFRGQPMMKLGENGETLCIGCNLCALACPENLIAMKSDRDPVTKKKVMVTYVYDVSRCMFCGLCEEACPTQSLKLGTGYEMALYSREGMVLDRKVLEHRTAPEPYEK.

4Fe-4S ferredoxin-type domains are found at residues 53–83 and 94–123; these read MKLG…MKSD and VTYV…LGTG. [4Fe-4S] cluster contacts are provided by cysteine 63, cysteine 66, cysteine 69, cysteine 73, cysteine 103, cysteine 106, cysteine 109, and cysteine 113.

The protein belongs to the complex I 23 kDa subunit family. In terms of assembly, NDH-1 is composed of 14 different subunits. Subunits NuoA, H, J, K, L, M, N constitute the membrane sector of the complex. [4Fe-4S] cluster is required as a cofactor.

It localises to the cell inner membrane. It catalyses the reaction a quinone + NADH + 5 H(+)(in) = a quinol + NAD(+) + 4 H(+)(out). Functionally, NDH-1 shuttles electrons from NADH, via FMN and iron-sulfur (Fe-S) centers, to quinones in the respiratory chain. The immediate electron acceptor for the enzyme in this species is believed to be ubiquinone. Couples the redox reaction to proton translocation (for every two electrons transferred, four hydrogen ions are translocated across the cytoplasmic membrane), and thus conserves the redox energy in a proton gradient. The chain is NADH-quinone oxidoreductase subunit I 1 from Koribacter versatilis (strain Ellin345).